The following is a 225-amino-acid chain: Heptaprenylglyceryl phosphate synthase (225 aa).

K6 is a sn-glycerol 1-phosphate binding site. 2 residues coordinate Mg(2+): D8 and T34. Sn-glycerol 1-phosphate is bound by residues Y153 to G158, G183, and G203 to N204.

Belongs to the GGGP/HepGP synthase family. Group I subfamily. As to quaternary structure, homodimer. Mg(2+) is required as a cofactor.

It carries out the reaction sn-glycerol 1-phosphate + all-trans-heptaprenyl diphosphate = 3-heptaprenyl-sn-glycero-1-phosphate + diphosphate. The protein operates within membrane lipid metabolism; glycerophospholipid metabolism. Prenyltransferase that catalyzes in vivo the transfer of the heptaprenyl moiety of heptaprenyl pyrophosphate (HepPP; 35 carbon atoms) to the C3 hydroxyl of sn-glycerol-1-phosphate (G1P), producing heptaprenylglyceryl phosphate (HepGP). This reaction is an ether-bond-formation step in the biosynthesis of archaea-type G1P-based membrane lipids found in Bacillales. The protein is Heptaprenylglyceryl phosphate synthase of Listeria innocua serovar 6a (strain ATCC BAA-680 / CLIP 11262).